A 689-amino-acid polypeptide reads, in one-letter code: Glycine--tRNA ligase beta subunit (689 aa).

This sequence belongs to the class-II aminoacyl-tRNA synthetase family. Tetramer of two alpha and two beta subunits.

It is found in the cytoplasm. It carries out the reaction tRNA(Gly) + glycine + ATP = glycyl-tRNA(Gly) + AMP + diphosphate. This chain is Glycine--tRNA ligase beta subunit, found in Shewanella sediminis (strain HAW-EB3).